The chain runs to 211 residues: Mitotic spindle assembly checkpoint protein MAD2B (211 aa).

One can recognise an HORMA domain in the interval 13 to 203 (QVVADVLSEF…SDILKMQLYV (191 aa)). Positions 21–155 (EFLEVAVHLI…FTVLVHTREA (135 aa)) are mediates interaction with REV1 and REV3L and homodimerization.

Homooligomer. Heterodimer with REV3L. This dimer forms the minimal DNA polymerase zeta complex (Pol-zeta2), with REV3L bearing DNA polymerase catalytic activity, although its activity is very low in this context. Component of the tetrameric Pol-zeta complex (Pol-zeta4), which consists of REV3L, MAD2L2, POLD2 and POLD3; Pol-zeta4 is the fully active form of DNA polymerase zeta. Component of the shieldin complex, consisting of SHLD1, SHLD2, SHLD3 and MAD2L2/REV7. Within the complex, SHLD2 forms a scaffold which interacts with a SHLD3-MAD2L2 subcomplex via its N-terminus, and with SHLD1 via its C-terminus. Interacts with REV1. Interacts with ADAM9. Interacts with CHAMP1. Interacts with FZR1 (in complex with the anaphase promoting complex APC). May interact with CDC20. Interacts with RAN. Interacts with ELK1; the interaction is direct and recruits MAD2L2 to ELK1-specific promoters. May interact with the JNK kinases MAPK8 and/or MAPK9 to stimulate ELK1 phosphorylation and transcriptional activity upon DNA damage. Interacts with TCF7L2; prevents its binding to promoters and negatively modulates its transcriptional activity. Interacts with YY1AP1. Interacts with PRCC; the interaction is direct. Interacts with POGZ. Interacts with ASTE1.

The protein localises to the nucleus. The protein resides in the cytoplasm. Its subcellular location is the cytoskeleton. It is found in the spindle. In terms of biological role, adapter protein able to interact with different proteins and involved in different biological processes. Mediates the interaction between the error-prone DNA polymerase zeta catalytic subunit REV3L and the inserter polymerase REV1, thereby mediating the second polymerase switching in translesion DNA synthesis. Translesion DNA synthesis releases the replication blockade of replicative polymerases, stalled in presence of DNA lesions. Component of the shieldin complex, which plays an important role in repair of DNA double-stranded breaks (DSBs). During G1 and S phase of the cell cycle, the complex functions downstream of TP53BP1 to promote non-homologous end joining (NHEJ) and suppress DNA end resection. Mediates various NHEJ-dependent processes including immunoglobulin class-switch recombination, and fusion of unprotected telomeres. May also regulate another aspect of cellular response to DNA damage through regulation of the JNK-mediated phosphorylation and activation of the transcriptional activator ELK1. Inhibits the FZR1- and probably CDC20-mediated activation of the anaphase promoting complex APC thereby regulating progression through the cell cycle. Regulates TCF7L2-mediated gene transcription and may play a role in epithelial-mesenchymal transdifferentiation. This chain is Mitotic spindle assembly checkpoint protein MAD2B (Mad2l2), found in Rattus norvegicus (Rat).